Consider the following 444-residue polypeptide: MSQSYINVIGAGLAGSEAAYQIAKRGIPVKLYEMRGVKSTPQHKTDNFAELVCSNSFRGDSLTNAVGLLKEEMRRLDSIIMRNGEAHRVPAGGAMAVDREGYSEAVTEEIHKHPLIEVIRDEITDIPGDAITVIATGPLTSDSLAAKIHELNGGDGFYFYDAAAPIVDKNTIDINKVYLKSRYDKGEAAYLNCPMTKEEFMAFHEALTTAEEAPLNSFEKEKYFEGCMPIEVMAKRGIKTMLYGPMKPVGLEYPEDYKGPRDGEFKTPYAVVQLRQDNAAGSLYNIVGFQTHLKWGEQKRVFQMIPGLENAEFVRYGVMHRNSYMDSPNLLNQTFATRKNPNLFFAGQMTGVEGYVESAASGLVAGINAVRRFNGESEVVFPQTTAIGALPHYITHTDSKHFQPMNVNFGIIKELEGPRIRDKKERYEAIATRALKDLEKFLNY.

An FAD-binding site is contributed by 10 to 15 (GAGLAG).

The protein belongs to the MnmG family. TrmFO subfamily. The cofactor is FAD.

The protein resides in the cytoplasm. It catalyses the reaction uridine(54) in tRNA + (6R)-5,10-methylene-5,6,7,8-tetrahydrofolate + NADH + H(+) = 5-methyluridine(54) in tRNA + (6S)-5,6,7,8-tetrahydrofolate + NAD(+). The catalysed reaction is uridine(54) in tRNA + (6R)-5,10-methylene-5,6,7,8-tetrahydrofolate + NADPH + H(+) = 5-methyluridine(54) in tRNA + (6S)-5,6,7,8-tetrahydrofolate + NADP(+). Catalyzes the folate-dependent formation of 5-methyl-uridine at position 54 (M-5-U54) in all tRNAs. This chain is Methylenetetrahydrofolate--tRNA-(uracil-5-)-methyltransferase TrmFO, found in Streptococcus agalactiae serotype Ia (strain ATCC 27591 / A909 / CDC SS700).